The sequence spans 189 residues: Cancer/testis antigen family 45 member A5 (189 aa).

Residues 1-23 (MTDKTEKVAVDPETVFKRPRECD) show a composition bias toward basic and acidic residues. Disordered stretches follow at residues 1–27 (MTDK…SPSY) and 82–118 (DGMM…SPKS).

This sequence belongs to the CT45 family. As to expression, testis specific. Expressed in cancer cell lines.

The protein resides in the nucleus. This Homo sapiens (Human) protein is Cancer/testis antigen family 45 member A5.